Here is a 610-residue protein sequence, read N- to C-terminus: MNSQELKNRQEKIRNFSIIAHIDHGKSTLADRILEKTETVSSREMQAQLLDSMDLERERGITIKLNAIELNYTAKDGETYILHLIDTPGHVDFTYEVSRSLAACEGAVLVVDAAQGIEAQTLANVYLALDNDLEILPVINKIDLPAADPERVRQEIEDVIGLDASEAVLASAKAGIGIEEILEQIVEKVPAPSGDVDAPLQALIFDSVYDAYRGVILQVRIINGVVKPGDKIQMMSNGKSFDVTEVGIFTPKAVGRDFLATGDVGYIAASIKTVADTRVGDTVTLANNPASEPLDGYKQMNPMVFAGLYPIESNKYNDLREALEKLQLNDASLQFEPETSQALGFGFRCGFLGLLHMDVIQERLEREFNIDLIMTAPSVVYHINTTDGEMLAVSNPSEFPDPTKVDSIEEPYVKAQIMVPQEFVGAVMELAQRKRGDFVTMDYIDDNRVNVIYQIPLAEIVFDFFDKLKSSTRGYASFDYEISEYRKSQLVKMDILLNGDKVDALSFIVHREFAYERGKLIVEKLKKIIPRQQFEVPIQAAIGQKIVARSDIKALRKNVLAKCYGGDVSRKRKLLEKQKAGKKRMKAIGSVEVPQEAFLSVLSMDEDTKK.

A tr-type G domain is found at 11–193 (EKIRNFSIIA…QIVEKVPAPS (183 aa)). Residues 23–28 (DHGKST) and 140–143 (NKID) each bind GTP.

This sequence belongs to the TRAFAC class translation factor GTPase superfamily. Classic translation factor GTPase family. LepA subfamily.

It is found in the cell membrane. The enzyme catalyses GTP + H2O = GDP + phosphate + H(+). Required for accurate and efficient protein synthesis under certain stress conditions. May act as a fidelity factor of the translation reaction, by catalyzing a one-codon backward translocation of tRNAs on improperly translocated ribosomes. Back-translocation proceeds from a post-translocation (POST) complex to a pre-translocation (PRE) complex, thus giving elongation factor G a second chance to translocate the tRNAs correctly. Binds to ribosomes in a GTP-dependent manner. This Streptococcus uberis (strain ATCC BAA-854 / 0140J) protein is Elongation factor 4.